The following is a 350-amino-acid chain: Ion-translocating oxidoreductase complex subunit D (350 aa).

The next 4 membrane-spanning stretches (helical) occupy residues 37–57 (YFFGFGVLIQVMLAIVVALTA), 68–88 (AVLSTISDNSALLTAILIGVA), 89–109 (IPPIAPWWLVVIGTLFAIVLV), and 120–140 (IFNPAMAAYVMLLISFPVQMT). Residue Thr185 is modified to FMN phosphoryl threonine. A run of 5 helical transmembrane segments spans residues 212–232 (GYGVGWFWVNMAYLAGGLIML), 239–259 (WHISFAILGSLFVCSSFGYLL), 265–285 (VGPLLQLFSGATMIAAFFIAT), 291–311 (ATSVKGRLLFGTLIGVMVYVI), and 315–335 (GGYPDAFAFAVLLANLCAPFI).

This sequence belongs to the NqrB/RnfD family. The complex is composed of six subunits: RnfA, RnfB, RnfC, RnfD, RnfE and RnfG. The cofactor is FMN.

Its subcellular location is the cell inner membrane. Its function is as follows. Part of a membrane-bound complex that couples electron transfer with translocation of ions across the membrane. The sequence is that of Ion-translocating oxidoreductase complex subunit D from Shewanella pealeana (strain ATCC 700345 / ANG-SQ1).